The sequence spans 247 residues: Ribonuclease PH (247 aa).

Residues arginine 87 and 125-127 (GTR) each bind phosphate.

This sequence belongs to the RNase PH family. Homohexameric ring arranged as a trimer of dimers.

The enzyme catalyses tRNA(n+1) + phosphate = tRNA(n) + a ribonucleoside 5'-diphosphate. Phosphorolytic 3'-5' exoribonuclease that plays an important role in tRNA 3'-end maturation. Removes nucleotide residues following the 3'-CCA terminus of tRNAs; can also add nucleotides to the ends of RNA molecules by using nucleoside diphosphates as substrates, but this may not be physiologically important. Probably plays a role in initiation of 16S rRNA degradation (leading to ribosome degradation) during starvation. The protein is Ribonuclease PH of Frankia casuarinae (strain DSM 45818 / CECT 9043 / HFP020203 / CcI3).